A 129-amino-acid chain; its full sequence is uncharacterized protein (129 aa).

The protein resides in the cytoplasm. The protein localises to the cytosol. It is found in the nucleus. This is an uncharacterized protein from Schizosaccharomyces pombe (strain 972 / ATCC 24843) (Fission yeast).